The following is a 288-amino-acid chain: MNKWLDLILKIHVHPFLWIIAALGLLTGHMKALLCLLLIVLIHELGHAALAVFFSWRIKRVFLLPFGGTVEVEEHGNRPLKEEFAVIIAGPLQHIWLQFAAWMLAEVSVIHQHTFELFTFYNLSILFVNLLPIWPLDGGKLLFLLFSKQLPFQKAHRLNLKTSLCFCLLLGCWVLFVIPLQISAWVLFVFLAVSLFEEYRQRHYIHVRFLLERYYGKNRELEKLLPLTVKAEDKVYHVMAEFKRGCKHPIIIEKSGQKLSQLDENEVLHAYFADKRTNSSMEELLLPY.

At M1–K10 the chain is on the mother cell cytoplasmic side. A helical membrane pass occupies residues I11–M30. Position 31 (K31) is a topological domain, forespore intermembrane space. The chain crosses the membrane as a helical span at residues A32–W56. H43 lines the Zn(2+) pocket. E44 is a catalytic residue. Zn(2+) is bound at residue H47. At R57–E83 the chain is on the mother cell cytoplasmic side. Residues F84 to A105 traverse the membrane as a helical segment. The Forespore intermembrane space segment spans residues E106–L126. The chain crosses the membrane as a helical span at residues F127–F146. A Zn(2+)-binding site is contributed by D137. At S147–K161 the chain is on the mother cell cytoplasmic side. Residues T162–I178 form a helical membrane-spanning segment. A topological domain (forespore intermembrane space) is located at residue P179. Residues L180–Y199 traverse the membrane as a helical segment. The Mother cell cytoplasmic segment spans residues R200–Y288.

This sequence belongs to the peptidase M50B family. As to quaternary structure, forms a complex with SpoIVFA and BofA localized in the mother-cell membrane surrounding the forespore. The cofactor is Zn(2+).

The protein resides in the forespore outer membrane. Its function is as follows. Implicated in the coupling of mother cell to forespore gene expression. Required for spore formation. Processes the pro-sigma K factor. The chain is Stage IV sporulation protein FB (spoIVFB) from Bacillus subtilis (strain 168).